Reading from the N-terminus, the 329-residue chain is Holliday junction branch migration complex subunit RuvB (329 aa).

A large ATPase domain (RuvB-L) region spans residues M1–Y180. Residues R20, G61, K64, T65, T66, E127–F129, R170, Y180, and R217 each bind ATP. Residue T65 participates in Mg(2+) binding. A small ATPAse domain (RuvB-S) region spans residues S181–G252. The head domain (RuvB-H) stretch occupies residues K255–I329. Residues R308 and R313 each coordinate DNA.

This sequence belongs to the RuvB family. In terms of assembly, homohexamer. Forms an RuvA(8)-RuvB(12)-Holliday junction (HJ) complex. HJ DNA is sandwiched between 2 RuvA tetramers; dsDNA enters through RuvA and exits via RuvB. An RuvB hexamer assembles on each DNA strand where it exits the tetramer. Each RuvB hexamer is contacted by two RuvA subunits (via domain III) on 2 adjacent RuvB subunits; this complex drives branch migration. In the full resolvosome a probable DNA-RuvA(4)-RuvB(12)-RuvC(2) complex forms which resolves the HJ.

It localises to the cytoplasm. It catalyses the reaction ATP + H2O = ADP + phosphate + H(+). The RuvA-RuvB-RuvC complex processes Holliday junction (HJ) DNA during genetic recombination and DNA repair, while the RuvA-RuvB complex plays an important role in the rescue of blocked DNA replication forks via replication fork reversal (RFR). RuvA specifically binds to HJ cruciform DNA, conferring on it an open structure. The RuvB hexamer acts as an ATP-dependent pump, pulling dsDNA into and through the RuvAB complex. RuvB forms 2 homohexamers on either side of HJ DNA bound by 1 or 2 RuvA tetramers; 4 subunits per hexamer contact DNA at a time. Coordinated motions by a converter formed by DNA-disengaged RuvB subunits stimulates ATP hydrolysis and nucleotide exchange. Immobilization of the converter enables RuvB to convert the ATP-contained energy into a lever motion, pulling 2 nucleotides of DNA out of the RuvA tetramer per ATP hydrolyzed, thus driving DNA branch migration. The RuvB motors rotate together with the DNA substrate, which together with the progressing nucleotide cycle form the mechanistic basis for DNA recombination by continuous HJ branch migration. Branch migration allows RuvC to scan DNA until it finds its consensus sequence, where it cleaves and resolves cruciform DNA. This Ehrlichia chaffeensis (strain ATCC CRL-10679 / Arkansas) protein is Holliday junction branch migration complex subunit RuvB.